Consider the following 1828-residue polypeptide: Chromodomain-helicase-DNA-binding protein 2 (1828 aa).

Positions 1–14 (MMRNKDKSQEEDSS) are enriched in basic and acidic residues. The tract at residues 1–243 (MMRNKDKSQE…EDDDFETDSD (243 aa)) is disordered. Residues 15-75 (LHSNASSHSA…SESESAGSKS (61 aa)) show a composition bias toward low complexity. Basic and acidic residues-rich tracts occupy residues 81–101 (EAKEKPASKKERIADVKKMWE), 115–128 (SRQEPSRFNIKEEA), and 146–155 (KKQEKWKQEP). The segment covering 175-204 (VKARRPVPRRTVPKPRVKKQPKTQRGKRKK) has biased composition (basic residues). Residues S207 and S208 each carry the phosphoserine modification. The segment covering 234 to 243 (EDDDFETDSD) has biased composition (acidic residues). Position 240 is a phosphothreonine (T240). S242 is subject to Phosphoserine. Chromo domains lie at 261–353 (ETIE…QWLG) and 378–456 (QIVE…IPTR). Residues 496–666 (AHSWCKNNSV…WSLLHFIMPE (171 aa)) enclose the Helicase ATP-binding domain. 509–516 (DEMGLGKT) serves as a coordination point for ATP. Positions 617–620 (DEAH) match the DEAH box motif. Residues 795–946 (LLDKLLTRLR…HLVIQRMDTT (152 aa)) enclose the Helicase C-terminal domain. Disordered stretches follow at residues 1030–1124 (EDEE…RSVR), 1331–1462 (VTGG…DEDD), 1556–1638 (HKKR…ADRG), and 1680–1828 (HMDA…VRKT). Over residues 1037-1065 (ERPHKDWDEIIPEEQRKKVEEEERQKELE) the composition is skewed to basic and acidic residues. Residues S1085, S1087, S1365, and S1386 each carry the phosphoserine modification. Residues 1347-1371 (KKENKVPRLKEEHGIELSSPRHSDN) show a composition bias toward basic and acidic residues. 2 stretches are compositionally biased toward basic and acidic residues: residues 1396–1431 (ENKENKEKQMSSRKDKEGDKERKKSKDKKEKPKSGD) and 1565–1574 (EQKKKDDVTG). The tract at residues 1464-1566 (LDQETFSICK…KKRSQEEEEQ (103 aa)) is CHD1 helical C-terminal domain (CHCT). Positions 1584-1601 (SGSSRDSLISQSHTSHNL) are enriched in polar residues. Composition is skewed to basic and acidic residues over residues 1698–1720 (RPYDQYSSDRDHRGHRDYYDRHH), 1739–1749 (QDFRRMSDHRP), 1760–1772 (DHYRSFHTDKLGE), and 1795–1814 (SPHDSKSPLDHRSPLERSLE). At S1807 the chain carries Phosphoserine.

It belongs to the SNF2/RAD54 helicase family. As to quaternary structure, interacts with MYOD1. Interacts with histone H3.3.

It is found in the nucleus. The enzyme catalyses ATP + H2O = ADP + phosphate + H(+). ATP-dependent chromatin-remodeling factor that specifically binds to the promoter of target genes, leading to chromatin remodeling, possibly by promoting deposition of histone H3.3. Involved in myogenesis via interaction with MYOD1: binds to myogenic gene regulatory sequences and mediates incorporation of histone H3.3 prior to the onset of myogenic gene expression, promoting their expression. This Homo sapiens (Human) protein is Chromodomain-helicase-DNA-binding protein 2 (CHD2).